The chain runs to 326 residues: ATP phosphoribosyltransferase regulatory subunit (326 aa).

This sequence belongs to the class-II aminoacyl-tRNA synthetase family. HisZ subfamily. In terms of assembly, heteromultimer composed of HisG and HisZ subunits.

Its subcellular location is the cytoplasm. Its pathway is amino-acid biosynthesis; L-histidine biosynthesis; L-histidine from 5-phospho-alpha-D-ribose 1-diphosphate: step 1/9. Required for the first step of histidine biosynthesis. May allow the feedback regulation of ATP phosphoribosyltransferase activity by histidine. This is ATP phosphoribosyltransferase regulatory subunit from Streptococcus thermophilus (strain ATCC BAA-491 / LMD-9).